The chain runs to 712 residues: MKIQTIIQIVLISFLFLNVESKKINCLHLQQDECIKNKDKCFLSNVNSCCEKDFLMCLPISSKYCESQTDDVFSNKNILKKSPPSSSHEWCLKKKKSILRFNTSCVPELDLDSEYFKPNLYKCKYSKCQKGFKCVDEKLHKKCETENNPCCKYESKCVPSKDIDQNEAPIFKNPKGQLAQDIYNHLNPDSPQFKDKPNHENHKKDKNNKKHKKDIKNNSDKNNNNNNNNNNKKNKTINNNEPNQNQQSNPIDRTFNNETPFPWNFKNQDQQQQKQEQTQKQTQKEYFKAGSPYPVLPNLNKEPTTHLNTIEPTSFTASASRYQLEGNDNKDEENIDENNGEDKKKKKKKKKDDKSKKPKDDEKHTKKPNVTEQPADDPSIEITEEPTITPSSSPVHQDPCKKATCPNGSHCLVYGNQAYCKLDKPPNYQTMSPLPQKQQPSVKKMDSLSMFYKKSKMLLSEYTTEQRPQLTCSTIKCEDDEVCINKVGLNPYCQIKPPPKPVSYNKTSCSQCPIGSYRCNPNPNGSGVICETDAINCRLIACKEGEFCIDNIENTPPKCYPKLLCNLSKIPPDYYCISDEIRGGFYVKYESYIDLSCETLLCEGVNSYCVENGGPICKTWPNDTIQYQPSCDKCPKDTMSCTPNENSNNKGVVCRIDRPSCSVIQCPDNQYCVNTDKGPKCYKRSIECSNSRCPRDYTCKRDEIRGGACLKN.

A signal peptide spans 1-21 (MKIQTIIQIVLISFLFLNVES). The N-linked (GlcNAc...) asparagine glycan is linked to Asn-102. Positions 181-400 (DIYNHLNPDS…SSSPVHQDPC (220 aa)) are disordered. Residues 192–203 (QFKDKPNHENHK) show a composition bias toward basic and acidic residues. The segment covering 204 to 214 (KDKNNKKHKKD) has biased composition (basic residues). N-linked (GlcNAc...) asparagine glycans are attached at residues Asn-217 and Asn-234. Low complexity predominate over residues 220 to 251 (DKNNNNNNNNNNKKNKTINNNEPNQNQQSNPI). Residues 254–269 (TFNNETPFPWNFKNQD) are compositionally biased toward polar residues. Residues 270-281 (QQQQKQEQTQKQ) show a composition bias toward low complexity. Positions 301–321 (KEPTTHLNTIEPTSFTASASR) are enriched in polar residues. The span at 330–339 (KDEENIDENN) shows a compositional bias: acidic residues. The segment covering 352 to 364 (DDKSKKPKDDEKH) has biased composition (basic and acidic residues). Residue Asn-369 is glycosylated (N-linked (GlcNAc...) asparagine). Acidic residues predominate over residues 374–384 (PADDPSIEITE). Positions 386 to 395 (PTITPSSSPV) are enriched in polar residues. Follistatin-like domains are found at residues 399–421 (PCKK…AYCK) and 471–494 (TCST…PYCQ). Asn-407 carries N-linked (GlcNAc...) asparagine glycosylation. N-linked (GlcNAc...) asparagine glycans are attached at residues Asn-505, Asn-524, and Asn-566. The Follistatin-like 3 domain occupies 596–618 (SCETLLCEGVNSYCVENGGPICK). Asn-622 is a glycosylation site (N-linked (GlcNAc...) asparagine). Follistatin-like domains lie at 660–682 (SCSV…PKCY) and 687–710 (ECSN…GACL).

Its subcellular location is the secreted. The chain is Follistatin-like domain-containing protein DDB_G0289517 from Dictyostelium discoideum (Social amoeba).